The primary structure comprises 360 residues: MRILGIETSCDETAASVVMRDEEGRGRILGDVVLSQLEEHSAYGGVVPEIAARAHVEALDTLIVEALLRAGVKLEDIDAIAATSGPGLIGGLIVGLMTGKAIARATGKPLYAVNHLEGHALTARLTDELQFPYLMLLVSGGHTQLILVKGVGEYERWGTTIDDALGEAFDKTAKLLGLPYPGGPAVERAARTGNPERFDFPRPLVGDARLDFSFSGLKTAVRQAAKSLEPVTEADIADICASFQRAISRTLRDRVGRSLKRFKAESASVAQPALVVAGGVAANQALRQTLQSLCDEHGFRFVAPPLSLCTDNAAMIAWAGAERLAAGLPADGLDVAPRSRWPLDAEAKALIGSGRRGAKA.

The Fe cation site is built by histidine 115 and histidine 119. Substrate-binding positions include 137–141 (LVSGG), aspartate 170, glycine 183, and asparagine 283. Aspartate 311 contributes to the Fe cation binding site.

It belongs to the KAE1 / TsaD family. Fe(2+) serves as cofactor.

It localises to the cytoplasm. It catalyses the reaction L-threonylcarbamoyladenylate + adenosine(37) in tRNA = N(6)-L-threonylcarbamoyladenosine(37) in tRNA + AMP + H(+). Required for the formation of a threonylcarbamoyl group on adenosine at position 37 (t(6)A37) in tRNAs that read codons beginning with adenine. Is involved in the transfer of the threonylcarbamoyl moiety of threonylcarbamoyl-AMP (TC-AMP) to the N6 group of A37, together with TsaE and TsaB. TsaD likely plays a direct catalytic role in this reaction. This chain is tRNA N6-adenosine threonylcarbamoyltransferase, found in Sinorhizobium medicae (strain WSM419) (Ensifer medicae).